The chain runs to 160 residues: MNIAVYPGSFDPITNGHLDIIKRASQVFDKVVVGILVNPDKKGLFSIEEREKLISRVVKDMPNVEVRSFSGLLVDFMKEENIKVIIKGLRAMSDFEYEFQMALMNKKLNPDIETLFMMTCAQYSYLSSSSIKQVAMFGGCIKGLVPDEIIEDICKKSNNK.

Ser-9 contacts substrate. Residues 9-10 (SF) and His-17 contribute to the ATP site. The substrate site is built by Lys-41, Leu-73, and Lys-87. ATP-binding positions include 88–90 (GLR), Glu-98, and 123–129 (YSYLSSS).

The protein belongs to the bacterial CoaD family. As to quaternary structure, homohexamer. Mg(2+) serves as cofactor.

It is found in the cytoplasm. It carries out the reaction (R)-4'-phosphopantetheine + ATP + H(+) = 3'-dephospho-CoA + diphosphate. Its pathway is cofactor biosynthesis; coenzyme A biosynthesis; CoA from (R)-pantothenate: step 4/5. Functionally, reversibly transfers an adenylyl group from ATP to 4'-phosphopantetheine, yielding dephospho-CoA (dPCoA) and pyrophosphate. The chain is Phosphopantetheine adenylyltransferase from Clostridium tetani (strain Massachusetts / E88).